Consider the following 101-residue polypeptide: Small ribosomal subunit protein uS14A (101 aa).

2 stretches are compositionally biased toward basic and acidic residues: residues K28 to A44 and R61 to P70. Positions K28 to L74 are disordered.

Belongs to the universal ribosomal protein uS14 family. Part of the 30S ribosomal subunit. Contacts proteins S3 and S10.

Functionally, binds 16S rRNA, required for the assembly of 30S particles and may also be responsible for determining the conformation of the 16S rRNA at the A site. The sequence is that of Small ribosomal subunit protein uS14A from Rhodococcus jostii (strain RHA1).